A 315-amino-acid polypeptide reads, in one-letter code: Diacylglycerol kinase (315 aa).

One can recognise a DAGKc domain in the interval Met1 to Tyr132. ATP contacts are provided by residues Asn10–Gly14, Thr41, Gly67–Glu73, and Thr94. Mg(2+)-binding residues include Lys213, Asp216, and Tyr218. Glu273 serves as the catalytic Proton acceptor.

It belongs to the diacylglycerol/lipid kinase family. In terms of assembly, homodimer. Requires Mg(2+) as cofactor.

It catalyses the reaction a 1,2-diacyl-sn-glycerol + ATP = a 1,2-diacyl-sn-glycero-3-phosphate + ADP + H(+). Its function is as follows. Catalyzes the phosphorylation of diacylglycerol (DAG) into phosphatidic acid. Is a key enzyme involved in the production of lipoteichoic acid by reintroducing DAG formed from the breakdown of membrane phospholipids into the phosphatidylglycerol biosynthetic pathway. The protein is Diacylglycerol kinase (dagK) of Staphylococcus aureus (strain MRSA252).